We begin with the raw amino-acid sequence, 611 residues long: Chaperone protein DnaK (611 aa).

Residue Thr172 is modified to Phosphothreonine; by autocatalysis. The interval 575–611 (AAQAAQAQQDGGNESADKQDDNVVDADYEEVNDDDKK) is disordered. A compositionally biased stretch (acidic residues) spans 596–611 (NVVDADYEEVNDDDKK).

It belongs to the heat shock protein 70 family.

Acts as a chaperone. The sequence is that of Chaperone protein DnaK from Shouchella clausii (strain KSM-K16) (Alkalihalobacillus clausii).